The following is a 532-amino-acid chain: CTP synthase (532 aa).

The tract at residues 1-265 (MKYIVVTGGV…DEYLMRKLNL (265 aa)) is amidoligase domain. Residue Ser12 coordinates CTP. Ser12 contributes to the UTP binding site. Residues 13–18 (GLGKGI) and Asp70 each bind ATP. Mg(2+) is bound by residues Asp70 and Glu140. CTP is bound by residues 147 to 149 (DIE), 186 to 191 (KTKPTQ), and Lys222. Residues 186–191 (KTKPTQ) and Lys222 each bind UTP. One can recognise a Glutamine amidotransferase type-1 domain in the interval 289–529 (SIAIVGKYVD…VRAALKYRRE (241 aa)). Position 349 (Gly349) interacts with L-glutamine. The active-site Nucleophile; for glutamine hydrolysis is Cys376. L-glutamine-binding positions include 377-380 (FGFQ), Glu400, and Arg457. Active-site residues include His502 and Glu504.

The protein belongs to the CTP synthase family. In terms of assembly, homotetramer.

It carries out the reaction UTP + L-glutamine + ATP + H2O = CTP + L-glutamate + ADP + phosphate + 2 H(+). The enzyme catalyses L-glutamine + H2O = L-glutamate + NH4(+). The catalysed reaction is UTP + NH4(+) + ATP = CTP + ADP + phosphate + 2 H(+). It participates in pyrimidine metabolism; CTP biosynthesis via de novo pathway; CTP from UDP: step 2/2. With respect to regulation, allosterically activated by GTP, when glutamine is the substrate; GTP has no effect on the reaction when ammonia is the substrate. The allosteric effector GTP functions by stabilizing the protein conformation that binds the tetrahedral intermediate(s) formed during glutamine hydrolysis. Inhibited by the product CTP, via allosteric rather than competitive inhibition. Catalyzes the ATP-dependent amination of UTP to CTP with either L-glutamine or ammonia as the source of nitrogen. Regulates intracellular CTP levels through interactions with the four ribonucleotide triphosphates. This is CTP synthase from Archaeoglobus fulgidus (strain ATCC 49558 / DSM 4304 / JCM 9628 / NBRC 100126 / VC-16).